The primary structure comprises 634 residues: Dachshund homolog 2 (634 aa).

Residues 76–162 (RMVDMHGVKV…LITRKDFETL (87 aa)) are DACHbox-N. 3 disordered regions span residues 171 to 194 (RKRQMTRKQAVNSSRPGRPPKRSL), 244 to 286 (LQGN…SGPQ), and 378 to 416 (IPESPSPAPSLEESHRPGSQTSSHPSSSVSSSPSQMDHH). Residues 244–269 (LQGNGSQNGTESEPDDLNSTTGGSES) are compositionally biased toward polar residues. Over residues 396–412 (SQTSSHPSSSVSSSPSQ) the composition is skewed to low complexity. The tract at residues 488-568 (SSVETLLTNI…KAKRKLQEAL (81 aa)) is DACHbox-C. A coiled-coil region spans residues 494-588 (LTNIQGLLKV…EQALKQATSG (95 aa)).

The protein belongs to the DACH/dachshund family. As to quaternary structure, interacts with SIX6. Interacts with EYA2. Expressed in embryo, and at lower levels in the newborn.

The protein resides in the nucleus. Transcription factor that is involved in regulation of organogenesis. Seems to be a regulator for SIX1 and SIX6. Seems to act as a corepressor of SIX6 in regulating proliferation by directly repressing cyclin-dependent kinase inhibitors, including the p27Kip1 promoter. Is recruited with SIX6 to the p27Kip1 promoter in embryonal retina. SIX6 corepression also seems to involve NCOR1, TBL1, HDAC1 and HDAC3. May be involved together with PAX3, SIX1, and EYA2 in regulation of myogenesis. In the developing somite, expression of DACH2 and PAX3 is regulated by the overlying ectoderm, and DACH2 and PAX3 positively regulate each other's expression. Probably binds to DNA via its DACHbox-N domain. The protein is Dachshund homolog 2 (Dach2) of Mus musculus (Mouse).